A 480-amino-acid polypeptide reads, in one-letter code: F-box only protein 3 (480 aa).

An F-box domain is found at 10–56; sequence LLTLESLPTDPLLLILSFVDYRDLINCCYVSRRLSQLSTHDPLWRRH. Positions 278-408 constitute an ApaG domain; sequence VATTGDITVS…FHMACPTFRV (131 aa). Acidic residues predominate over residues 419–459; the sequence is EYEEMEEEAEEEEEEENDDSADMDESDESDEDENESDEGEG. The tract at residues 419 to 464 is disordered; that stretch reads EYEEMEEEAEEEEEEENDDSADMDESDESDEDENESDEGEGEERRR.

In terms of assembly, part of a SCF (SKP1-cullin-F-box) protein ligase complex SCF(FBXO3) consisting of FBXO3, SKP1, CUL1 and RBX1. Interacts with PML, interaction is direct and takes place either alone or within the SCF complex.

The protein localises to the nucleus. Its pathway is protein modification; protein ubiquitination. Substrate recognition component of the SCF (SKP1-CUL1-F-box protein)-type E3 ubiquitin ligase complex, SCF(FBXO3), which mediates the ubiquitination and subsequent proteasomal degradation of target proteins. Mediates the ubiquitination of HIPK2 and probably that of EP300, leading to rapid degradation by the proteasome. In the presence of PML, HIPK2 ubiquitination still occurs, but degradation is prevented. PML, HIPK2 and FBXO3 may act synergically to activate p53/TP53-dependent transactivation. The SCF(FBXO3) also acts as a regulator of inflammation by mediating ubiquitination and degradation of FBXL2 in response to lipopolysaccharide (LPS). The SCF(FBXO3) complex specifically recognizes FBXL2 phosphorylated at 'Thr-404' and promotes its ubiquitination. This Rattus norvegicus (Rat) protein is F-box only protein 3 (Fbxo3).